The sequence spans 478 residues: D(1B) dopamine receptor (478 aa).

Over 1-38 (MLPPGRNGTAHRARLGLQRQLAQVDAPGGSAAPLGPAQ) the chain is Extracellular. N-linked (GlcNAc...) asparagine glycosylation occurs at Asn-7. A helical transmembrane segment spans residues 39-64 (VVTAGLLTLLIVWTLLGNVLVCAAIV). Over 65–75 (RSRHLRAKMTN) the chain is Cytoplasmic. Residues 76–102 (IFIVSLAVSDLFVALLVMPWKAVAEVA) traverse the membrane as a helical segment. The Extracellular portion of the chain corresponds to 103–111 (GYWPFGAFC). The cysteines at positions 111 and 211 are disulfide-linked. A helical transmembrane segment spans residues 112–134 (DIWVAFDIMCSTASILNLCIISV). The Cytoplasmic portion of the chain corresponds to 135-153 (DRYWAISRPFRYERKMTQR). Residues 154–179 (VALVMVALAWTLSILISFIPVQLNWH) form a helical membrane-spanning segment. Residues 180 to 215 (RDKAGSQGREGLLSNETPWEEGWELDGRTENCDSSL) are Extracellular-facing. Residues 216 to 240 (NRTYAISSSLISFYIPVAIMIVTYT) traverse the membrane as a helical segment. Over 241–289 (RIYRIAQVQIRRISSLERAAEHAQSCRSRGACEPDPSLRASIKKETKVF) the chain is Cytoplasmic. The helical transmembrane segment at 290–317 (KTLSVIMGVFVCCWLPFFILNCMVPFCS) threads the bilayer. Residues 318–335 (SGDAQGPRTGFPCVSETT) lie on the Extracellular side of the membrane. The helical transmembrane segment at 336–357 (FDIFVWFGWANSSLNPIIYAFN) threads the bilayer. Topologically, residues 358-478 (ADFRKVFAQL…LTPNCFHKTA (121 aa)) are cytoplasmic. Cys-370 carries the S-palmitoyl cysteine lipid modification. Residues 416–446 (GDREVGEEEEAEEEGPFDHMSQISPTTPDGD) form a disordered region. Residues 420–430 (VGEEEEAEEEG) are compositionally biased toward acidic residues.

Belongs to the G-protein coupled receptor 1 family.

Its subcellular location is the cell membrane. In terms of biological role, dopamine receptor whose activity is mediated by G proteins which activate adenylyl cyclase. The polypeptide is D(1B) dopamine receptor (Drd5) (Mus musculus (Mouse)).